We begin with the raw amino-acid sequence, 427 residues long: Proteinase-activated receptor 1 (427 aa).

Residues 1-21 form the signal peptide; sequence MGPRWLLLWAAGLGLCSPLVS. The propeptide at 22 to 41 is removed for receptor activation; it reads ARTRGPRPGTDPTNGTLGPR. The disordered stretch occupies residues 23 to 87; sequence RTRGPRPGTD…RSSPPQKSPP (65 aa). The N-linked (GlcNAc...) asparagine glycan is linked to N35. Topologically, residues 42–104 are extracellular; sequence SFFLRNSNDG…SGYLTSAWLT (63 aa). The segment covering 58–68 has biased composition (acidic residues); it reads PEDEDSSEGEF. N-linked (GlcNAc...) asparagine glycosylation occurs at N77. A helical membrane pass occupies residues 105-130; it reads VFIPSVYTGVFLVSLPLNIMAVVVFV. Residues 131–139 are Cytoplasmic-facing; the sequence is LKMKVKKPA. A helical membrane pass occupies residues 140–159; it reads VVYMLHLAAADVLFVCVLPF. The Extracellular portion of the chain corresponds to 160–178; the sequence is KISYYFSGSDWRFGSAMCR. Cysteines 177 and 256 form a disulfide. Residues 179 to 200 traverse the membrane as a helical segment; it reads FVTAAFYGNMYASIMLMTAISV. Residues 201–220 lie on the Cytoplasmic side of the membrane; sequence DRFLAVVYPIQSLSWRTLGR. Residues 221–241 traverse the membrane as a helical segment; it reads ASFICLAIWAMAIAGVAPLLL. Topologically, residues 242 to 270 are extracellular; that stretch reads QEQATQVPGLNITACHDVLNQTLLEGYYS. N-linked (GlcNAc...) asparagine glycans are attached at residues N252 and N261. Residues 271–290 traverse the membrane as a helical segment; that stretch reads YYFSAFSAVFFFVPLTLSTV. Topologically, residues 291–313 are cytoplasmic; the sequence is SYVSIIRCLSSSTVANQNKKSRA. Residues 314–336 traverse the membrane as a helical segment; it reads LLLSAAVFCIFILCFGPTNILLL. Residues 337 to 351 lie on the Extracellular side of the membrane; it reads LHYAFLSSDPMTEAA. The chain crosses the membrane as a helical span at residues 352 to 376; it reads YFAYLLCVCVSSISCCIDPLIYYYA. The Cytoplasmic segment spans residues 377–427; it reads SSECQRHLFAILHCKESSDPGSCNSSGQLMPSKMDTCSSNLSSSLYKKLLT. Position 420 is a phosphoserine (S420).

Belongs to the G-protein coupled receptor 1 family. Proteolytic cleavage by thrombin generates a new N-terminus that functions as a tethered ligand. Also proteolytically cleaved by cathepsin CTSG. Post-translationally, phosphorylated in the C-terminal tail; probably mediating desensitization prior to the uncoupling and internalization of the receptor.

Its subcellular location is the cell membrane. Functionally, high affinity receptor that binds the activated thrombin, leading to calcium release from intracellular stores. The thrombin-activated receptor signaling pathway is mediated through PTX-insensitive G proteins, activation of phospholipase C resulting in the production of 1D-myo-inositol 1,4,5-trisphosphate (InsP3) which binds to InsP3 receptors causing calcium release from the stores. In astrocytes, the calcium released into the cytosol allows the Ca(2+)-dependent release of L-glutamate into the synaptic cleft through BEST1, that targets the neuronal postsynaptic GRIN2A/NMDAR receptor resulting in the synaptic plasticity regulation. May play a role in platelets activation and in vascular development. Mediates up-regulation of pro-inflammatory cytokines, such as MCP-1/CCL2 and IL6, triggered by coagulation factor Xa (F10) in cardiac fibroblasts and umbilical vein endothelial cells. The sequence is that of Proteinase-activated receptor 1 from Bos taurus (Bovine).